The following is a 71-amino-acid chain: Brevinin-1V (71 aa).

Positions 1-22 (MFTLKKSLLLLFFLGTINLSLC) are cleaved as a signal peptide. A propeptide spanning residues 23–45 (EQERDADEEERRDDSEERDIEVE) is cleaved from the precursor. Cysteine 65 and cysteine 71 are disulfide-bonded.

The protein belongs to the frog skin active peptide (FSAP) family. Brevinin subfamily. Expressed by the skin glands.

It is found in the secreted. Functionally, has antimicrobial activity against Gram-positive bacteria and fungi but has weak or no activity against a range of Gram-negative bacteria except P.faecalis. Active against the Gram-positive bacteria E.faecium 091299 (MIC=37.5 uM), S.aureus ATCC 25923 (MIC=2.4 uM), S.carnosus KHS (MIC=19 uM), B.licheniformis X39 (MIC=2.4 uM) and R.rhodochrous X15 (MIC=1.2 uM) and a lower activity against E.faecalis 981 (MIC=75 uM). Active against the Gram-negative bacterium P.faecalis X29 (MIC=9.5 uM) is virtually inactive against E.coli ATCC 25922 (MIC=150 uM), and inactive against P.aeruginosa and S.typhi. Has antifungal activity against C.albicans ATCC 2002 (MIC=9.5 uM) and is also active against the slime mold 090223 (MIC=1.2 uM). Has low hemolytic activity against human erythrocytes (LC(50)=75 uM). In Odorrana hainanensis (Odor frog), this protein is Brevinin-1V.